A 412-amino-acid chain; its full sequence is Acetate kinase (412 aa).

N10 lines the Mg(2+) pocket. K17 is a binding site for ATP. The disordered stretch occupies residues 40–61; sequence ETSRLAHTPSAGGGAEPRERTG. Residue R95 participates in substrate binding. Catalysis depends on D152, which acts as the Proton donor/acceptor. Residues 212 to 216, 286 to 288, and 334 to 338 each bind ATP; these read HLGNG, DMR, and GVGEN. Position 388 (E388) interacts with Mg(2+).

It belongs to the acetokinase family. As to quaternary structure, homodimer. The cofactor is Mg(2+). Requires Mn(2+) as cofactor.

The protein resides in the cytoplasm. The enzyme catalyses acetate + ATP = acetyl phosphate + ADP. It functions in the pathway metabolic intermediate biosynthesis; acetyl-CoA biosynthesis; acetyl-CoA from acetate: step 1/2. Catalyzes the formation of acetyl phosphate from acetate and ATP. Can also catalyze the reverse reaction. In Streptomyces griseus subsp. griseus (strain JCM 4626 / CBS 651.72 / NBRC 13350 / KCC S-0626 / ISP 5235), this protein is Acetate kinase.